We begin with the raw amino-acid sequence, 286 residues long: Prepilin leader peptidase/N-methyltransferase (286 aa).

A helical membrane pass occupies residues 10-30 (FAVPLAAVLGLLVGSFLNVVI). Zn(2+) contacts are provided by Cys70, Cys73, Cys95, and Cys98. A run of 6 helical transmembrane segments spans residues 102-122 (ISIRYPLIELLTGVLFGLVAW), 126-146 (WSWITLGGLILTAFLISLTFI), 157-177 (MTLPLIWLGLIFNLDGGFVPL), 181-201 (VLGAVAGYSSLWLLCAVYKLL), 224-244 (ISALPVLIFVSSLIGLVAAIV), and 250-270 (GRHFAFGPALTVSGWIIFTAN).

Belongs to the peptidase A24 family. Requires Zn(2+) as cofactor.

It localises to the cell inner membrane. It catalyses the reaction Typically cleaves a -Gly-|-Phe- bond to release an N-terminal, basic peptide of 5-8 residues from type IV prepilin, and then N-methylates the new N-terminal amino group, the methyl donor being S-adenosyl-L-methionine.. In terms of biological role, plays an essential role in type IV pili and type II pseudopili formation by proteolytically removing the leader sequence from substrate proteins and subsequently monomethylating the alpha-amino group of the newly exposed N-terminal phenylalanine. The polypeptide is Prepilin leader peptidase/N-methyltransferase (pilD) (Neisseria gonorrhoeae).